The following is a 517-amino-acid chain: uncharacterized protein (517 aa).

Disordered stretches follow at residues 16 to 148 (KDES…TITK), 156 to 175 (VNKE…NTTT), and 216 to 351 (KLEK…EENE). Residues 48-75 (NNNNNNNNTTTTNNNTNNSNTSTSNNSK) are compositionally biased toward low complexity. Residues 84 to 112 (FDDDDDDGDEEDEEEEDDDDDDDDDDDET) show a composition bias toward acidic residues. Residues 127-143 (QPQPQPQPQPQPQPPIK) show a composition bias toward pro residues. Residues 236-252 (VSSTLSNSFDPNIIHNQ) show a composition bias toward polar residues. The segment covering 254 to 266 (SPPPPPISIPIPL) has biased composition (pro residues). Low complexity-rich tracts occupy residues 271-320 (NLNN…NSNI) and 327-347 (SSSM…SNNN). A coiled-coil region spans residues 340-452 (DNSSSNNNEE…HQNQQNSMNN (113 aa)).

It belongs to the ENTR1 family.

This is an uncharacterized protein from Dictyostelium discoideum (Social amoeba).